Reading from the N-terminus, the 455-residue chain is Venom prothrombin activator nigrarin-D (455 aa).

An N-terminal signal peptide occupies residues M1–A20. Residues E21–R40 constitute a propeptide that is removed on maturation. One can recognise a Gla domain in the interval S41–D86. 4-carboxyglutamate is present on residues E46, E47, E54, E56, E59, E60, E65, E66, E69, E72, and E75. C57 and C62 are disulfide-bonded. The EGF-like 1; calcium-binding domain occupies D86 to E122. Cystine bridges form between C90/C101, C95/C110, C112/C121, C129/C140, C136/C149, C151/C164, C172/C328, C216/C221, C236/C252, C376/C390, and C401/C429. S92 carries an O-linked (Hex...) serine glycan. Residues C129–C164 enclose the EGF-like 2 domain. Positions R182 to R209 are cleaved as a propeptide — activation peptide. A Peptidase S1 domain is found at I210–S453. The Charge relay system role is filled by H251. A glycan (N-linked (GlcNAc...) asparagine) is linked at N254. Catalysis depends on D308, which acts as the Charge relay system. The active-site Charge relay system is S405.

It belongs to the peptidase S1 family. Snake venom subfamily. As to quaternary structure, heterodimer of a light chain and a heavy chain; disulfide-linked. Post-translationally, the vitamin K-dependent, enzymatic carboxylation of some glutamate residues allows the modified protein to bind calcium. In terms of tissue distribution, expressed by the venom gland.

Its subcellular location is the secreted. It carries out the reaction Selective cleavage of Arg-|-Thr and then Arg-|-Ile bonds in prothrombin to form thrombin.. Functionally, snake prothrombin activator that attacks the hemostatic system of prey. This protein is functionally similar to blood coagulation factor Xa. The chain is Venom prothrombin activator nigrarin-D from Cryptophis nigrescens (Eastern small-eyed snake).